The primary structure comprises 119 residues: Large ribosomal subunit protein bL20 (119 aa).

This sequence belongs to the bacterial ribosomal protein bL20 family.

Its function is as follows. Binds directly to 23S ribosomal RNA and is necessary for the in vitro assembly process of the 50S ribosomal subunit. It is not involved in the protein synthesizing functions of that subunit. The polypeptide is Large ribosomal subunit protein bL20 (Clostridium botulinum (strain ATCC 19397 / Type A)).